The following is an 881-amino-acid chain: MSSSSSSLLLMMLLLLLLLLTSKLEAIPVLSSTSPSPGVRILRSSESIVAPLDDEVVFECETSLPPERFEWSYSNTSSSSSAISSSFIYLSSVAGKVNISHEYAISRLAIVVRPESLGEYRCVGWFGPLVVTSTIARLDLASISLATKKESHLNWRTAPGNSIIWPCGQQVQANPLASWSFYKNGKEIQPLNHNGTLILNNISSESNGVYSCMATNTASGVRLPIPSSMELHVTKQEGSKSPYLLFGQPTRQSVTTREGQRLLLVCPGVGSPPPIPVWSSPNVTAAVPNKRSKLLSYGLEINPVQVEDAGIYICYLDNGIRPPLELYINVRVEQAPVIVQAPWAGSLTNESDRLQLECQAKGEPKPTIYWLLNGKRSHEVNQSQLLSNGRYLVLKKVLKEHAGYVQCFARNHLGEHSAGTLLQVNPKLVNETDLVVSRPQRPKKLQIMVPPSAPNVTRLSDESVMLRWHVQRNEGLPIQFFKVQYRLINEGKRKMWQTTNENIPYGKPKWNSALGKNFTASVTNLKPQRTYRFRIMAVYSNNDNKESNTSAKFFLQRGSSLEPMPVPELVKIDEYSETAVVLHWRLSDDADEQSITGYYAYYRPSSFAGEYSKATIEGAKARSFHIGSLEVGTIYEFKLQSFSADSASEFSALKQGRTQRSKLTTTEQPIQQKGGDRNVNTTPNHNETYSLNPLLTGTIGGGALLLLLLIAFSFCLCRRKNRNGGDGRNSQNKPRLAELREDFLPLAGGGVPGSKQRQRSRHIHITLNPLDQQQQQPLDEKNTNTNLNSPHLEADPELVYFQRQQQNHPTTYDYDHGQRRLSSSSLRRSQRTLERTPGSNNNLQQIGSETTTTGQRVILKRPRLSSRSENLSSGSLNSVGV.

A signal peptide spans 1–26 (MSSSSSSLLLMMLLLLLLLLTSKLEA). The Extracellular segment spans residues 27 to 693 (IPVLSSTSPS…NHNETYSLNP (667 aa)). Ig-like C2-type domains follow at residues 37–138 (PGVR…IARL), 128–228 (PLVV…IPSS), 242–330 (PYLL…YINV), and 336–425 (PVIV…LQVN). Cystine bridges form between Cys60/Cys122, Cys167/Cys212, and Cys266/Cys314. N-linked (GlcNAc...) asparagine glycosylation is found at Asn75, Asn98, Asn194, Asn201, Asn282, Asn349, Asn381, Asn430, and Asn455. A disulfide bridge connects residues Cys358 and Cys407. 2 consecutive Fibronectin type-III domains span residues 450–558 (PPSA…LQRG) and 566–661 (VPEL…TQRS). Residues Arg486, Lys492, and Lys494 each coordinate heparin. Asn517 carries an N-linked (GlcNAc...) asparagine glycan. Arg532 provides a ligand contact to heparin. Residue Asn548 is glycosylated (N-linked (GlcNAc...) asparagine). A disordered region spans residues 655–685 (QGRTQRSKLTTTEQPIQQKGGDRNVNTTPNH). The span at 656 to 671 (GRTQRSKLTTTEQPIQ) shows a compositional bias: polar residues. Asn686 carries an N-linked (GlcNAc...) asparagine glycan. Residues 694–714 (LLTGTIGGGALLLLLLIAFSF) traverse the membrane as a helical segment. Residues 715-881 (CLCRRKNRNG…SSGSLNSVGV (167 aa)) lie on the Cytoplasmic side of the membrane. Disordered stretches follow at residues 768–791 (NPLD…NSPH) and 809–881 (PTTY…SVGV). Residues 837-855 (PGSNNNLQQIGSETTTTGQ) are compositionally biased toward polar residues. Positions 865 to 881 (SSRSENLSSGSLNSVGV) are enriched in low complexity.

It belongs to the immunoglobulin superfamily. IHOG family. In terms of assembly, homodimer. Heterotetramer; 2 iHog chains bind 2 hh chains when facilitated by heparin, heparin is required to promote high-affinity interactions between hh and iHog.

The protein resides in the membrane. Its function is as follows. Mediates response to the active Hedgehog (Hh) protein signal in embryos, functioning upstream or at the level of patched (ptc). This is Interference hedgehog from Drosophila willistoni (Fruit fly).